Here is a 146-residue protein sequence, read N- to C-terminus: Ribonuclease H (146 aa).

Residues 1 to 138 form the RNase H type-1 domain; sequence MYAWTDGACR…ADALANRGID (138 aa). Mg(2+) is bound by residues D6, E44, D66, and D130.

This sequence belongs to the RNase H family. In terms of assembly, monomer. Mg(2+) serves as cofactor.

It localises to the cytoplasm. It carries out the reaction Endonucleolytic cleavage to 5'-phosphomonoester.. In terms of biological role, endonuclease that specifically degrades the RNA of RNA-DNA hybrids. This is Ribonuclease H from Alkalilimnicola ehrlichii (strain ATCC BAA-1101 / DSM 17681 / MLHE-1).